Consider the following 394-residue polypeptide: MAKERFDRSKPHVNIGTIGHIDHGKTTLTAAICTVLSKAGTSEAKKYDEIDAAPEEKARGITINTAHVEYATQNRHYAHVDCPGHADYVKNMITGAAQMDGGILVVSATDGPMPQTREHILLARQVGVPKMVVFLNKCDVADDPEMQELVEMEVRDLLKSYGFDGDNTPVIRGSALGALNGEPAWEEKIHELMKAVDEYIPTPDREVDKPFLLPIEDTMTITGRGTVVTGRVERGQLKVGEEVEIVGITDTRKVVVTGIEMFRKELDAAMAGDNAGILLRGVDRKDVQRGQVLAKPGSITPHKKFRAEIYALKKDEGGRHTAFLNGYRPQFYFRTTDVTGSIQLKEGTEMVMPGDNTEIIVELISSIACEKGSKFSIREGGRTVGAGTVVEVLE.

In terms of domain architecture, tr-type G spans 10–204 (KPHVNIGTIG…AVDEYIPTPD (195 aa)). The tract at residues 19-26 (GHIDHGKT) is G1. 19–26 (GHIDHGKT) contributes to the GTP binding site. Threonine 26 is a Mg(2+) binding site. The G2 stretch occupies residues 60-64 (GITIN). The interval 81-84 (DCPG) is G3. GTP contacts are provided by residues 81–85 (DCPGH) and 136–139 (NKCD). The tract at residues 136–139 (NKCD) is G4. The segment at 174–176 (SAL) is G5.

This sequence belongs to the TRAFAC class translation factor GTPase superfamily. Classic translation factor GTPase family. EF-Tu/EF-1A subfamily. Monomer.

It localises to the cytoplasm. The enzyme catalyses GTP + H2O = GDP + phosphate + H(+). Functionally, GTP hydrolase that promotes the GTP-dependent binding of aminoacyl-tRNA to the A-site of ribosomes during protein biosynthesis. This Mycoplasmoides gallisepticum (strain R(low / passage 15 / clone 2)) (Mycoplasma gallisepticum) protein is Elongation factor Tu.